Here is a 336-residue protein sequence, read N- to C-terminus: MRRELAIEFSRVTESAALAGYKWLGRGDKNTADGAAVNAMRIMLNQVNIDGTIVIGEGEIDEAPMLYIGEKVGTGRGDAVDIAVDPIEGTRMTAMGQANALAVLAVGDKGCFLNAPDMYMEKLIVGPGAKGTIDLNLPLADNLRNVAAALGKPLSELTVTILAKPRHDAVIAEMQQLGVRVFAIPDGDVAASILTCMPDSEVDVLYGIGGAPEGVVSAAVIRALDGDMNGRLLARHDVKGDNEENRRIGEQELARCKAMGIEAGKVLRLGDMARSDNVIFSATGITKGDLLEGISRKGNIATTETLLIRGKSRTIRRIQSIHYLDRKDPEMQVHIL.

4 residues coordinate Mn(2+): Asp-33, Glu-57, Asp-85, and Glu-88. Residues 88-90 (EGT), Tyr-119, 164-166 (KPR), 186-188 (DGD), and Gly-210 contribute to the substrate site. Mn(2+) is bound at residue Glu-213.

This sequence belongs to the FBPase class 2 family. Homodimer. It depends on Mn(2+) as a cofactor.

It is found in the cytoplasm. The catalysed reaction is beta-D-fructose 1,6-bisphosphate + H2O = beta-D-fructose 6-phosphate + phosphate. The protein operates within carbohydrate biosynthesis; gluconeogenesis. Functionally, catalyzes the hydrolysis of fructose 1,6-bisphosphate to fructose 6-phosphate. This Shigella flexneri protein is Fructose-1,6-bisphosphatase class 2 (glpX).